The sequence spans 113 residues: Hydrogenase maturation factor HypA (113 aa).

His-2 is a Ni(2+) binding site. Residues Cys-73, Cys-76, Cys-89, and Cys-92 each coordinate Zn(2+).

The protein belongs to the HypA/HybF family.

Its function is as follows. Involved in the maturation of [NiFe] hydrogenases. Required for nickel insertion into the metal center of the hydrogenase. The chain is Hydrogenase maturation factor HypA from Rhodopseudomonas palustris (strain BisB5).